Reading from the N-terminus, the 388-residue chain is Subtilisin-like serine protease AsES (388 aa).

The first 15 residues, 1 to 15 (MRLSLVLALLPVAFG), serve as a signal peptide directing secretion. Residues 16 to 105 (APTRRDEPAP…IEQDAIVTLA (90 aa)) constitute a propeptide, removed in mature form. The Peptidase S8 domain occupies 114-388 (PWGLARISTR…RLAFNGNPSG (275 aa)). Cysteines 141 and 230 form a disulfide. Residues aspartate 146 and histidine 176 each act as charge relay system in the active site. N-linked (GlcNAc...) asparagine glycosylation is found at asparagine 232 and asparagine 237. Cysteine 285 and cysteine 357 are joined by a disulfide. Residue serine 331 is the Charge relay system of the active site.

Belongs to the peptidase S8 family.

The protein localises to the secreted. Its activity is regulated as follows. The elicitor proteolytic activity is completely inhibited by PMSF. The activity is also significantly reduced by aprotinin (leading to 37% residual activity), by leupeptin (leading to 54% residual activity), by the ovomucoid trypsin inhibitor (leading to 65% residual activity), and by p-aminobenzamidine (leading to 26% residual activity). Functionally, extracellular elicitor protein that induces a strong defense response in strawberry and confers both local and systemic plant resistance against the fungal pathogen Colletotricum acutatum, the casual agent of anthracnose disease. AsES activates a cascade of defense responses, including calcium influx, oxidative burst, hypersensitive cell-death response (HR), accumulation of autofluorescent compounds, cell-wall reinforcement with callose and lignin deposition, salicylic acid accumulation, and expression of defense-related genes, such as PR1, PG1, MYB30, RBOH-D, RBOH-F, CHI23, and FLS. The oxidative burst consists in a progressive extracellular accumulation of H(2)O(2) that starts immediately after the contact with AsES and is preceded by a rapid and transient cell membrane depolarization. During this phase takes place also a rapid intracellular accumulation of NO at the chloroplasts. After the first extracellular H(2)O(2) production phase, two intracellular H(2)O(2) accumulation events occur, the first 2 hours after induction, and the second 7 hours after induction. AsES also produces a transient increase of ion leakage, and a progressive alkalinization of the extracellular medium. Confers also local and systemic plant resistance against Botrytis cinerea in Arabidopsis thaliana. Systemic, but not local resistance is dependent on the length of exposure to AsES. The protection to B.cinerea is due to the induction of the plant defenses via the salicylic acid, jasmonic acid and ethylene signaling pathways. Exhibits subtilisin-like proteolytic activity which is necessary but not sufficient for its elicitor function in strawberry plants. Probably induces defense by means of proteolysis of one or multiple host proteins that are specific targets of this protease. This Sarocladium strictum (Black bundle disease fungus) protein is Subtilisin-like serine protease AsES.